A 223-amino-acid polypeptide reads, in one-letter code: UPF0173 metal-dependent hydrolase THA_544 (223 aa).

It belongs to the UPF0173 family.

This Thermosipho africanus (strain TCF52B) protein is UPF0173 metal-dependent hydrolase THA_544.